Consider the following 475-residue polypeptide: MADKIDISLYEKARIVVYGDIMLDRYWYGQASRISPEAPIPVVNVDQIEARPGGAANVALNVAALGASVELMGVVGDDQESRELETLLNKKSINCHFHRLNDHPTVTKLRVLGQNQQLLRLDFEKTLKHYEDKGLLQRYQHSLSHAQAVILSDYAKGALFNVTAPIQRAREKGLPVLVDPKSVDFSRYAGATLLTPNLKEFEAVVGHCRTDQELEFKARALIHQYRFEAILITRGKQGMMLIQKEGAAINLVAHAREVYDVTGAGDTVIAVMAASLAAGGDFYEAAQLANLAAGLVVRKLGAATVTVPELRRALHQITASHHGILSEKALLLAVADARAHGETIVMTNGCFDILHAGHVHYLEAAKAMGHRLIVAVNDDNSVRRLKGKDRPINSLQARMEVLTALRAIDWVVPFSEDTPARLITEVLPNILVKGGDYQPSQIAGGDEVVKNGGKVLTIPIKEGFSTSRLVEKMLN.

Positions 1–321 (MADKIDISLY…RALHQITASH (321 aa)) are ribokinase. 197 to 200 (NLKE) lines the ATP pocket. Asp-266 is a catalytic residue. Residues 346 to 475 (MTNGCFDILH…TSRLVEKMLN (130 aa)) form a cytidylyltransferase region.

The protein in the N-terminal section; belongs to the carbohydrate kinase PfkB family. It in the C-terminal section; belongs to the cytidylyltransferase family. As to quaternary structure, homodimer.

The enzyme catalyses D-glycero-beta-D-manno-heptose 7-phosphate + ATP = D-glycero-beta-D-manno-heptose 1,7-bisphosphate + ADP + H(+). The catalysed reaction is D-glycero-beta-D-manno-heptose 1-phosphate + ATP + H(+) = ADP-D-glycero-beta-D-manno-heptose + diphosphate. Its pathway is nucleotide-sugar biosynthesis; ADP-L-glycero-beta-D-manno-heptose biosynthesis; ADP-L-glycero-beta-D-manno-heptose from D-glycero-beta-D-manno-heptose 7-phosphate: step 1/4. It functions in the pathway nucleotide-sugar biosynthesis; ADP-L-glycero-beta-D-manno-heptose biosynthesis; ADP-L-glycero-beta-D-manno-heptose from D-glycero-beta-D-manno-heptose 7-phosphate: step 3/4. Catalyzes the phosphorylation of D-glycero-D-manno-heptose 7-phosphate at the C-1 position to selectively form D-glycero-beta-D-manno-heptose-1,7-bisphosphate. Its function is as follows. Catalyzes the ADP transfer from ATP to D-glycero-beta-D-manno-heptose 1-phosphate, yielding ADP-D-glycero-beta-D-manno-heptose. The protein is Bifunctional protein HldE of Coxiella burnetii (strain RSA 331 / Henzerling II).